The following is a 245-amino-acid chain: MSPYKAILRPNGFTFKQFFIAHDRCAMKVGTDGVLLGAWAPVTSVKRVLDIGSGSGLIALMLAQRTSEPVQIDAVELDEEAATQAQENVAASPWAHRVHVQQADVVEWAQRCEHSYSLIVSNPPYFSPGSQCASPERTTARYTTGLTHEMLLDCAEKLIDEDGFFCVILPASAGSKLLEQALQRGWHLRFRTDIADNDTRPANRVLLALSPQPGERLLDSMTIRGPDRQYSAAHCRLTRDFYLFR.

This sequence belongs to the methyltransferase superfamily. tRNA (adenine-N(6)-)-methyltransferase family.

The protein resides in the cytoplasm. It carries out the reaction adenosine(37) in tRNA1(Val) + S-adenosyl-L-methionine = N(6)-methyladenosine(37) in tRNA1(Val) + S-adenosyl-L-homocysteine + H(+). In terms of biological role, specifically methylates the adenine in position 37 of tRNA(1)(Val) (anticodon cmo5UAC). The protein is tRNA1(Val) (adenine(37)-N6)-methyltransferase of Erwinia tasmaniensis (strain DSM 17950 / CFBP 7177 / CIP 109463 / NCPPB 4357 / Et1/99).